A 227-amino-acid chain; its full sequence is Probable septum site-determining protein MinC (227 aa).

It belongs to the MinC family. As to quaternary structure, interacts with MinD and FtsZ.

Functionally, cell division inhibitor that blocks the formation of polar Z ring septums. Rapidly oscillates between the poles of the cell to destabilize FtsZ filaments that have formed before they mature into polar Z rings. Prevents FtsZ polymerization. The protein is Probable septum site-determining protein MinC of Bacillus pumilus (strain SAFR-032).